The chain runs to 93 residues: Protein VNG_0358C (93 aa).

The sequence is that of Protein VNG_0358C from Halobacterium salinarum (strain ATCC 700922 / JCM 11081 / NRC-1) (Halobacterium halobium).